Here is a 355-residue protein sequence, read N- to C-terminus: MKLNVNLPHHPYDIVIENGALSQVGSWLSQLWQPQKLVVITDNRVARLYAEKVKLSLEAAGFKVFTFDFLEGEASKNLTTVNKAYEFLAKVGLTRSDGIVALGGGVVGDLAGFVASTYMRGIHFVQIPTSLTAQVDSSIGGKTGVNTPWAKNMVGTFTQPDGVLIDPEVLHTLGQRELIEGMGEVVKYGLIEDKELWDELSEMDGSPESILEHAESIIYHSCDVKRKIVIEDELDNGVRLYLNFGHTIGHAIEATAGYGQVMHGEAVAIGMVQVSRVAEKQGLMPAGITEDIIHMCQKFGLPVDYQPWNENALYQALTHDKKARGNSIKLVLVPELGSANIHQIPLEEMKEFLKK.

Residues 71–76 (EGEASK), 105–109 (GVVGD), 129–130 (TS), Lys142, and Lys151 each bind NAD(+). Zn(2+)-binding residues include Glu184, His246, and His263.

Belongs to the sugar phosphate cyclases superfamily. Dehydroquinate synthase family. It depends on Co(2+) as a cofactor. Zn(2+) serves as cofactor. NAD(+) is required as a cofactor.

It is found in the cytoplasm. It carries out the reaction 7-phospho-2-dehydro-3-deoxy-D-arabino-heptonate = 3-dehydroquinate + phosphate. It participates in metabolic intermediate biosynthesis; chorismate biosynthesis; chorismate from D-erythrose 4-phosphate and phosphoenolpyruvate: step 2/7. Functionally, catalyzes the conversion of 3-deoxy-D-arabino-heptulosonate 7-phosphate (DAHP) to dehydroquinate (DHQ). The chain is 3-dehydroquinate synthase from Streptococcus gordonii (strain Challis / ATCC 35105 / BCRC 15272 / CH1 / DL1 / V288).